Here is a 512-residue protein sequence, read N- to C-terminus: 2-isopropylmalate synthase (512 aa).

The Pyruvate carboxyltransferase domain maps to 5 to 268; sequence LIIFDTTLRD…DLGIATQHIL (264 aa). The Mn(2+) site is built by Asp-14, His-202, His-204, and Asn-239. The interval 394-512 is regulatory domain; sequence GFVSLFQQSE…NKADRVAAQG (119 aa).

Belongs to the alpha-IPM synthase/homocitrate synthase family. LeuA type 1 subfamily. As to quaternary structure, homodimer. Mn(2+) is required as a cofactor.

The protein resides in the cytoplasm. The enzyme catalyses 3-methyl-2-oxobutanoate + acetyl-CoA + H2O = (2S)-2-isopropylmalate + CoA + H(+). It functions in the pathway amino-acid biosynthesis; L-leucine biosynthesis; L-leucine from 3-methyl-2-oxobutanoate: step 1/4. Functionally, catalyzes the condensation of the acetyl group of acetyl-CoA with 3-methyl-2-oxobutanoate (2-ketoisovalerate) to form 3-carboxy-3-hydroxy-4-methylpentanoate (2-isopropylmalate). The chain is 2-isopropylmalate synthase from Verminephrobacter eiseniae (strain EF01-2).